The primary structure comprises 466 residues: Argininosuccinate lyase (466 aa).

Belongs to the lyase 1 family. Argininosuccinate lyase subfamily.

Its subcellular location is the cytoplasm. The enzyme catalyses 2-(N(omega)-L-arginino)succinate = fumarate + L-arginine. It participates in amino-acid biosynthesis; L-arginine biosynthesis; L-arginine from L-ornithine and carbamoyl phosphate: step 3/3. The chain is Argininosuccinate lyase from Synechococcus sp. (strain ATCC 27144 / PCC 6301 / SAUG 1402/1) (Anacystis nidulans).